The following is a 121-amino-acid chain: Keratin-associated protein 1-4 (121 aa).

Belongs to the KRTAP type 1 family. As to quaternary structure, interacts with hair keratins. As to expression, expressed in the middle/upper portions of the hair cortex, in the region termed the keratogenous zone.

Its function is as follows. In the hair cortex, hair keratin intermediate filaments are embedded in an interfilamentous matrix, consisting of hair keratin-associated proteins (KRTAP), which are essential for the formation of a rigid and resistant hair shaft through their extensive disulfide bond cross-linking with abundant cysteine residues of hair keratins. The matrix proteins include the high-sulfur and high-glycine-tyrosine keratins. This chain is Keratin-associated protein 1-4 (KRTAP1-4), found in Homo sapiens (Human).